Reading from the N-terminus, the 64-residue chain is Carnocyclin-A (64 aa).

The propeptide occupies 1–4; the sequence is MLYE. The segment at residues 5–64 is a cross-link (cyclopeptide (Leu-Leu)); that stretch reads LVAYGIAQGTAEKVVSLINAGLTVGSIISILGGVTVGLSGVFTAVKAAIAKQGIKKAIQL.

Its subcellular location is the secreted. Cyclopeptide antibiotic that inhibits the growth of Gram-positive bacteria, but has no effect on the growth of Gram-negative bacteria. The chain is Carnocyclin-A from Carnobacterium maltaromaticum (Carnobacterium piscicola).